Consider the following 187-residue polypeptide: uncharacterized protein (187 aa).

The disordered stretch occupies residues 42 to 63; that stretch reads RTNGPGKDSFSFSTSGSKPSSS. Positions 50–63 are enriched in low complexity; it reads SFSFSTSGSKPSSS.

This is an uncharacterized protein from Saccharomyces cerevisiae (strain ATCC 204508 / S288c) (Baker's yeast).